Consider the following 174-residue polypeptide: Co-chaperone protein HscB homolog (174 aa).

One can recognise a J domain in the interval 2 to 74 (NYFELFKFSP…IRRAEHMLSL (73 aa)).

It belongs to the HscB family. As to quaternary structure, interacts with HscA and stimulates its ATPase activity.

Co-chaperone involved in the maturation of iron-sulfur cluster-containing proteins. Seems to help targeting proteins to be folded toward HscA. This chain is Co-chaperone protein HscB homolog, found in Shewanella baltica (strain OS185).